Here is a 373-residue protein sequence, read N- to C-terminus: 4-hydroxy-3-methylbut-2-en-1-yl diphosphate synthase (flavodoxin) (373 aa).

4 residues coordinate [4Fe-4S] cluster: cysteine 270, cysteine 273, cysteine 305, and glutamate 312.

The protein belongs to the IspG family. [4Fe-4S] cluster serves as cofactor.

The enzyme catalyses (2E)-4-hydroxy-3-methylbut-2-enyl diphosphate + oxidized [flavodoxin] + H2O + 2 H(+) = 2-C-methyl-D-erythritol 2,4-cyclic diphosphate + reduced [flavodoxin]. It functions in the pathway isoprenoid biosynthesis; isopentenyl diphosphate biosynthesis via DXP pathway; isopentenyl diphosphate from 1-deoxy-D-xylulose 5-phosphate: step 5/6. Converts 2C-methyl-D-erythritol 2,4-cyclodiphosphate (ME-2,4cPP) into 1-hydroxy-2-methyl-2-(E)-butenyl 4-diphosphate. In Erwinia tasmaniensis (strain DSM 17950 / CFBP 7177 / CIP 109463 / NCPPB 4357 / Et1/99), this protein is 4-hydroxy-3-methylbut-2-en-1-yl diphosphate synthase (flavodoxin).